A 225-amino-acid polypeptide reads, in one-letter code: Uracil-DNA glycosylase (225 aa).

The Proton acceptor role is filled by D68.

This sequence belongs to the uracil-DNA glycosylase (UDG) superfamily. UNG family.

It localises to the cytoplasm. The catalysed reaction is Hydrolyzes single-stranded DNA or mismatched double-stranded DNA and polynucleotides, releasing free uracil.. In terms of biological role, excises uracil residues from the DNA which can arise as a result of misincorporation of dUMP residues by DNA polymerase or due to deamination of cytosine. This chain is Uracil-DNA glycosylase, found in Mycolicibacterium vanbaalenii (strain DSM 7251 / JCM 13017 / BCRC 16820 / KCTC 9966 / NRRL B-24157 / PYR-1) (Mycobacterium vanbaalenii).